We begin with the raw amino-acid sequence, 119 residues long: uncharacterized protein (119 aa).

Positions 1–30 are cleaved as a signal peptide; sequence MCPECFFLMLCFCGYCSSSSSSFRSSPVYG.

This is an uncharacterized protein from Escherichia coli (strain UTI89 / UPEC).